Reading from the N-terminus, the 37-residue chain is Cytochrome b6-f complex subunit 5 (37 aa).

A helical transmembrane segment spans residues 5–25 (LLSGIVLGMIPVTLAGLFVTA).

Belongs to the PetG family. In terms of assembly, the 4 large subunits of the cytochrome b6-f complex are cytochrome b6, subunit IV (17 kDa polypeptide, PetD), cytochrome f and the Rieske protein, while the 4 small subunits are PetG, PetL, PetM and PetN. The complex functions as a dimer.

The protein localises to the plastid. It is found in the chloroplast thylakoid membrane. Component of the cytochrome b6-f complex, which mediates electron transfer between photosystem II (PSII) and photosystem I (PSI), cyclic electron flow around PSI, and state transitions. PetG is required for either the stability or assembly of the cytochrome b6-f complex. This chain is Cytochrome b6-f complex subunit 5, found in Staurastrum punctulatum (Green alga).